A 44-amino-acid chain; its full sequence is Cuticle protein CP466 (44 aa).

2 consecutive repeat copies span residues 3-20 (LLEGPSGVLFKDGQKKYL) and 27-44 (VLLTESGAVLSNGDNVQF).

In terms of tissue distribution, calcified shell.

This is Cuticle protein CP466 from Cancer pagurus (Rock crab).